The chain runs to 518 residues: 2-isopropylmalate synthase (518 aa).

The region spanning 5–268 is the Pyruvate carboxyltransferase domain; sequence IIIFDTTLRD…DTRINTQEIH (264 aa). Residues D14, H202, H204, and N238 each contribute to the Mn(2+) site. The segment at 393–518 is regulatory domain; that stretch reads TLDVITSQCI…DLKLHKIAGV (126 aa).

This sequence belongs to the alpha-IPM synthase/homocitrate synthase family. LeuA type 1 subfamily. As to quaternary structure, homodimer. Requires Mn(2+) as cofactor.

Its subcellular location is the cytoplasm. It catalyses the reaction 3-methyl-2-oxobutanoate + acetyl-CoA + H2O = (2S)-2-isopropylmalate + CoA + H(+). It functions in the pathway amino-acid biosynthesis; L-leucine biosynthesis; L-leucine from 3-methyl-2-oxobutanoate: step 1/4. In terms of biological role, catalyzes the condensation of the acetyl group of acetyl-CoA with 3-methyl-2-oxobutanoate (2-ketoisovalerate) to form 3-carboxy-3-hydroxy-4-methylpentanoate (2-isopropylmalate). The polypeptide is 2-isopropylmalate synthase (Pasteurella multocida (strain Pm70)).